A 718-amino-acid polypeptide reads, in one-letter code: Pullulanase (718 aa).

The active-site Nucleophile is the Asp406. Residue Glu435 is the Proton donor of the active site.

The protein belongs to the glycosyl hydrolase 13 family.

The enzyme catalyses Hydrolysis of (1-&gt;6)-alpha-D-glucosidic linkages in pullulan, amylopectin and glycogen, and in the alpha- and beta-limit dextrins of amylopectin and glycogen.. The chain is Pullulanase (amyX) from Bacillus subtilis (strain 168).